A 444-amino-acid chain; its full sequence is L-seryl-tRNA(Sec) selenium transferase (444 aa).

Lys284 is subject to N6-(pyridoxal phosphate)lysine.

It belongs to the SelA family. The cofactor is pyridoxal 5'-phosphate.

The protein localises to the cytoplasm. It carries out the reaction L-seryl-tRNA(Sec) + selenophosphate + H(+) = L-selenocysteinyl-tRNA(Sec) + phosphate. It participates in aminoacyl-tRNA biosynthesis; selenocysteinyl-tRNA(Sec) biosynthesis; selenocysteinyl-tRNA(Sec) from L-seryl-tRNA(Sec) (bacterial route): step 1/1. Functionally, converts seryl-tRNA(Sec) to selenocysteinyl-tRNA(Sec) required for selenoprotein biosynthesis. This is L-seryl-tRNA(Sec) selenium transferase from Wolinella succinogenes (strain ATCC 29543 / DSM 1740 / CCUG 13145 / JCM 31913 / LMG 7466 / NCTC 11488 / FDC 602W) (Vibrio succinogenes).